The sequence spans 146 residues: Hemoglobin subunit beta (146 aa).

N-acetylvaline is present on Val1. The 145-residue stretch at 2-146 folds into the Globin domain; the sequence is HLTAEEKSAV…VATALAHKYH (145 aa). Position 12 is a phosphothreonine (Thr12). Phosphoserine is present on Ser44. The residue at position 59 (Lys59) is an N6-acetyllysine. His63 provides a ligand contact to heme b. Lys82 carries the N6-acetyllysine modification. His92 is a binding site for heme b. Cys93 carries the S-nitrosocysteine modification. N6-acetyllysine is present on Lys144.

This sequence belongs to the globin family. Heterotetramer of two alpha chains and two beta chains. Red blood cells.

Its function is as follows. Involved in oxygen transport from the lung to the various peripheral tissues. The protein is Hemoglobin subunit beta (HBB) of Cebus albifrons (White-fronted capuchin).